Reading from the N-terminus, the 371-residue chain is Mitogen-activated protein kinase homolog NTF6 (371 aa).

Residues 38 to 324 form the Protein kinase domain; it reads IPPIQPVGRG…VEDALNHPFL (287 aa). ATP contacts are provided by residues 44 to 52 and Lys-67; that span reads VGRGAYGMV. The Proton acceptor role is filled by Asp-164. Thr-196 is modified (phosphothreonine). The TXY motif lies at 196–198; the sequence is TEY. At Tyr-198 the chain carries Phosphotyrosine.

It belongs to the protein kinase superfamily. CMGC Ser/Thr protein kinase family. MAP kinase subfamily. The cofactor is Mg(2+). Dually phosphorylated on Thr-196 and Tyr-198, which activates the enzyme. Very low autophosphorylation, although dramatically increased when Mn(2+) is added to the reaction instead of Mg(2+).

It catalyses the reaction L-seryl-[protein] + ATP = O-phospho-L-seryl-[protein] + ADP + H(+). The enzyme catalyses L-threonyl-[protein] + ATP = O-phospho-L-threonyl-[protein] + ADP + H(+). Activated by tyrosine and threonine phosphorylation. This Nicotiana tabacum (Common tobacco) protein is Mitogen-activated protein kinase homolog NTF6 (NTF6).